The sequence spans 411 residues: LL-diaminopimelate aminotransferase (411 aa).

Substrate contacts are provided by Y15 and G42. Pyridoxal 5'-phosphate contacts are provided by residues Y72, 108 to 109 (AK), Y132, N188, Y219, and 247 to 249 (SFS). Substrate is bound by residues K109, Y132, and N188. Position 250 is an N6-(pyridoxal phosphate)lysine (K250). Pyridoxal 5'-phosphate contacts are provided by R258 and N293. The substrate site is built by N293 and R389.

This sequence belongs to the class-I pyridoxal-phosphate-dependent aminotransferase family. LL-diaminopimelate aminotransferase subfamily. Homodimer. Requires pyridoxal 5'-phosphate as cofactor.

The enzyme catalyses (2S,6S)-2,6-diaminopimelate + 2-oxoglutarate = (S)-2,3,4,5-tetrahydrodipicolinate + L-glutamate + H2O + H(+). It participates in amino-acid biosynthesis; L-lysine biosynthesis via DAP pathway; LL-2,6-diaminopimelate from (S)-tetrahydrodipicolinate (aminotransferase route): step 1/1. Functionally, involved in the synthesis of meso-diaminopimelate (m-DAP or DL-DAP), required for both lysine and peptidoglycan biosynthesis. Catalyzes the direct conversion of tetrahydrodipicolinate to LL-diaminopimelate. Is also able to catalyze the reverse reaction in vitro, i.e. the transamination of LL-diaminopimelate with 2-oxoglutarate to produce tetrahydrodipicolinate and glutamate. Can also use m-DAP instead of LL-DAP as the amino-group donor, and oxaloacetate or pyruvate as the amino-group acceptor. This Desulfitobacterium hafniense (strain DSM 10664 / DCB-2) protein is LL-diaminopimelate aminotransferase.